Consider the following 278-residue polypeptide: Probable ribosomal RNA small subunit methyltransferase A (278 aa).

S-adenosyl-L-methionine is bound by residues Asn23, Leu25, Gly50, Glu71, Asp95, and Asn110.

The protein belongs to the class I-like SAM-binding methyltransferase superfamily. rRNA adenine N(6)-methyltransferase family. RsmA subfamily.

The protein resides in the cytoplasm. Its function is as follows. Specifically dimethylates two adjacent adenosines in the loop of a conserved hairpin near the 3'-end of 16S rRNA in the 30S particle. May play a critical role in biogenesis of 30S subunits. The protein is Probable ribosomal RNA small subunit methyltransferase A of Thermococcus gammatolerans (strain DSM 15229 / JCM 11827 / EJ3).